Reading from the N-terminus, the 410-residue chain is Sporulation killing factor maturation protein SkfB (410 aa).

One can recognise a Radical SAM core domain in the interval serine 103–aspartate 314. [4Fe-4S] cluster contacts are provided by cysteine 117, cysteine 121, cysteine 124, cysteine 380, cysteine 385, and cysteine 387.

The protein belongs to the radical SAM superfamily. [4Fe-4S] cluster serves as cofactor.

The protein resides in the cytoplasm. Catalyzes the formation of the thioether bond required for production of the sporulation killing factor (SKF) from SkfA. Forms the cysteine-methionine thioether bond found in SKF; the acceptor amino acid can be hydrophobic, aromatic or a small hydrophilic amino acid but not a larger hydrophilic amino acid, i.e. Met=Ala, Phe, Leu, Tyr&gt;Asn, Ser&gt;&gt;Gln, Glu, Lys. The relative position of Cys and Met in the substrate cannot be inverted, in vitro the thioether bond cannot be made in the absence of the SkfA propeptide, suggesting this is the first reaction in SKF maturation. In vitro, in the absence of a second substrate, cleaves S-adenosyl-L-methionine into Met and 5'-dA. This chain is Sporulation killing factor maturation protein SkfB, found in Bacillus subtilis (strain 168).